The sequence spans 275 residues: Cytochrome c oxidase subunit 3 (275 aa).

7 helical membrane passes run Pro-22 to Phe-42, Ser-52 to Phe-72, Gly-96 to Phe-116, Pro-132 to Leu-152, Ala-173 to Ile-193, Phe-211 to Val-231, and Ile-253 to Trp-273.

The protein belongs to the cytochrome c oxidase subunit 3 family. Component of the cytochrome c oxidase (complex IV, CIV), a multisubunit enzyme composed of a catalytic core of 3 subunits and several supernumerary subunits. The complex exists as a monomer or a dimer and forms supercomplexes (SCs) in the inner mitochondrial membrane with ubiquinol-cytochrome c oxidoreductase (cytochrome b-c1 complex, complex III, CIII).

It localises to the mitochondrion inner membrane. It catalyses the reaction 4 Fe(II)-[cytochrome c] + O2 + 8 H(+)(in) = 4 Fe(III)-[cytochrome c] + 2 H2O + 4 H(+)(out). In terms of biological role, component of the cytochrome c oxidase, the last enzyme in the mitochondrial electron transport chain which drives oxidative phosphorylation. The respiratory chain contains 3 multisubunit complexes succinate dehydrogenase (complex II, CII), ubiquinol-cytochrome c oxidoreductase (cytochrome b-c1 complex, complex III, CIII) and cytochrome c oxidase (complex IV, CIV), that cooperate to transfer electrons derived from NADH and succinate to molecular oxygen, creating an electrochemical gradient over the inner membrane that drives transmembrane transport and the ATP synthase. Cytochrome c oxidase is the component of the respiratory chain that catalyzes the reduction of oxygen to water. Electrons originating from reduced cytochrome c in the intermembrane space (IMS) are transferred via the dinuclear copper A center (CU(A)) of subunit 2 and heme A of subunit 1 to the active site in subunit 1, a binuclear center (BNC) formed by heme A3 and copper B (CU(B)). The BNC reduces molecular oxygen to 2 water molecules using 4 electrons from cytochrome c in the IMS and 4 protons from the mitochondrial matrix. The chain is Cytochrome c oxidase subunit 3 (COX3) from Mycosarcoma maydis (Corn smut fungus).